Consider the following 156-residue polypeptide: Small ribosomal subunit protein uS7 (156 aa).

Belongs to the universal ribosomal protein uS7 family. In terms of assembly, part of the 30S ribosomal subunit. Contacts proteins S9 and S11.

Its function is as follows. One of the primary rRNA binding proteins, it binds directly to 16S rRNA where it nucleates assembly of the head domain of the 30S subunit. Is located at the subunit interface close to the decoding center, probably blocks exit of the E-site tRNA. This is Small ribosomal subunit protein uS7 from Kocuria rhizophila (strain ATCC 9341 / DSM 348 / NBRC 103217 / DC2201).